Reading from the N-terminus, the 1726-residue chain is Merozoite surface protein 1 (1726 aa).

A signal peptide spans 1–19 (MKIIFFLCSFLFFIINTQC). Residues 61-124 (KGASAQSGTS…SGTSGTSPSS (64 aa)) are compositionally biased toward low complexity. The tract at residues 61 to 149 (KGASAQSGTS…PPADASDSDA (89 aa)) is disordered. The segment covering 125–134 (RSNTLPRSNT) has biased composition (polar residues). Residue asparagine 133 is glycosylated (N-linked (GlcNAc...) asparagine). Low complexity predominate over residues 135–144 (SSGASPPADA). Residues asparagine 272, asparagine 501, asparagine 567, and asparagine 638 are each glycosylated (N-linked (GlcNAc...) asparagine). A disordered region spans residues 735–771 (SETTEDGGHSTHTLSQSGETEVTEETEETEETVGHTT). A compositionally biased stretch (acidic residues) spans 755–765 (EVTEETEETEE). N-linked (GlcNAc...) asparagine glycosylation is found at asparagine 827, asparagine 924, asparagine 944, asparagine 990, asparagine 1016, asparagine 1114, and asparagine 1221. Positions 914–952 (TGTSSTSSPGNTTVNTAQSATHSNSQNQQSNASSTNTQN) are enriched in low complexity. The disordered stretch occupies residues 914–961 (TGTSSTSSPGNTTVNTAQSATHSNSQNQQSNASSTNTQNGVAVSSGPA). Disordered regions lie at residues 1254-1284 (VTPP…TQIP) and 1476-1497 (KEKF…DEQK). Positions 1270–1284 (VSGSSGSTKEETQIP) are enriched in polar residues. The span at 1481–1490 (SSPPTTPPSP) shows a compositional bias: pro residues. A glycan (N-linked (GlcNAc...) asparagine) is linked at asparagine 1613. 2 consecutive EGF-like domains span residues 1617 to 1657 (HQCV…VENP) and 1658 to 1705 (NPTC…IFCS). Cystine bridges form between cysteine 1619-cysteine 1630, cysteine 1624-cysteine 1640, cysteine 1642-cysteine 1653, cysteine 1661-cysteine 1674, cysteine 1668-cysteine 1688, and cysteine 1690-cysteine 1704. Serine 1705 carries GPI-anchor amidated serine lipidation. A propeptide spans 1706-1726 (SSNFLGISFLLILMLILYSFI) (removed in mature form).

Forms a complex composed of subunits p83, p30, p38, and p42 which remain non-covalently associated; the complex is formed at the merozoite surface prior to egress from host erythrocytes. Forms a complex composed of processed MSP1 subunits, MSP6 subunit p36 and MSP7; the complex is formed at the merozoite surface prior to egress from host erythrocytes. Within the complex, interacts (via subunit p38) with MSP6 subunit p36 and (via subunits p83, p30 and p38) with MSP7 (via subunit p22). Forms a complex composed of MSP1, MSP6, DBLMSP1 and DBLMSP2. Within the complex, interacts (via subunit p38) with DBLMSP1 and DBLMSP2. Forms a complex composed of MSP1, and rhoptry proteins RhopH3, RAP1 and CLAG9/RhopH3. Within the complex, interacts (via subunits p42 and p19) with RhopH3 (via C-terminus). Forms a complex composed of MSP1, MSP6, MSP7, MSP9 and MSP3; within the complex, MSP6 and MSP9 mediate the binding to the host erythrocyte. Interacts (via subunits p19 and p42) with MSP9; the interaction is direct; MSP1 subunits p19 or p42, and MSP9 form a co-ligand complex that interacts with host SLC4A1/Band 3 protein. May interact with PFD6. Interacts with host spectrin. In terms of assembly, interacts with host glycophorin GYPA in a sialic acid-independent manner. As to quaternary structure, interacts with host proinflammatory cytokine S100P; the interaction blocks S100P inflammatory and chemotactic activities. Interacts with host SLC4A1/Band 3 (via 5ABC region) on the host erythrocyte surface in a sialic acid-independent manner. In terms of processing, the p190 precursor is cleaved by SUB1 prior to merozoite egress into 4 subunits p83, p30, p38, and p42 which remain non-covalently associated. SUB1-mediated proteolytic cleavage occurs in an orderly manner; the first cleavage occurs at the p30/p38 site, followed by cleavage at the p83/p30 site, the last cleavage occurs at the p38/p42 site. The order of cleavage is essential for parasite viability. SUB1-mediated processing is essential for merozoite egress. In a second processing step during erythrocyte invasion, p42 is cleaved by SUB2 into p33 and p19; the latter remains attached to the merozoite surface via its GPI-anchor and is endocytosed during the subsequent ring stage.

It localises to the cell membrane. The protein resides in the secreted. Its subcellular location is the vacuole membrane. Its function is as follows. During the asexual blood stage, involved in merozoite egress from host erythrocytes possibly via its interaction with the host cytoskeleton protein spectrin resulting in the destabilization of the host cytoskeleton and thus leading to erythrocyte cell membrane rupture. Involved in the binding to host erythrocytes and is required for host erythrocyte invasion. By binding to host proinflammatory cytokine S100P may interfere with host immune responses. Functionally, involved in merozoite invasion of host erythrocytes. May play a role in the biogenesis and/or function of the food vacuole during the intraerythrocytic development. The polypeptide is Merozoite surface protein 1 (Plasmodium falciparum (isolate Palo Alto / Uganda)).